A 922-amino-acid polypeptide reads, in one-letter code: Pyruvate dehydrogenase E1 component (922 aa).

In terms of assembly, homodimer. Part of an unusual ODH/PDH supercomplex, consisting of AceE (E1), AceF (E2), and Lpd (E3) together with OdhA (E1+E2). The cofactor is Mg(2+). It depends on thiamine diphosphate as a cofactor.

The enzyme catalyses N(6)-[(R)-lipoyl]-L-lysyl-[protein] + pyruvate + H(+) = N(6)-[(R)-S(8)-acetyldihydrolipoyl]-L-lysyl-[protein] + CO2. Functionally, is a specific component of the pyruvate dehydrogenase (PDH) complex, that catalyzes the overall conversion of pyruvate to acetyl-CoA and CO(2). AceE has reductase activity with pyruvate but does not react with 2-oxoglutarate. This chain is Pyruvate dehydrogenase E1 component (aceE), found in Corynebacterium glutamicum (strain ATCC 13032 / DSM 20300 / JCM 1318 / BCRC 11384 / CCUG 27702 / LMG 3730 / NBRC 12168 / NCIMB 10025 / NRRL B-2784 / 534).